A 90-amino-acid chain; its full sequence is Large ribosomal subunit protein eL34 (90 aa).

Positions 38–65 are disordered; sequence ARCGRPLGGVPRGRPPRVRRLSKTAKRP. Positions 51-62 are enriched in basic residues; that stretch reads RPPRVRRLSKTA.

The protein belongs to the eukaryotic ribosomal protein eL34 family.

This chain is Large ribosomal subunit protein eL34 (rpl34e), found in Aeropyrum pernix (strain ATCC 700893 / DSM 11879 / JCM 9820 / NBRC 100138 / K1).